The following is a 294-amino-acid chain: 4-hydroxy-tetrahydrodipicolinate synthase (294 aa).

Position 45 (Thr-45) interacts with pyruvate. Tyr-133 (proton donor/acceptor) is an active-site residue. Lys-161 serves as the catalytic Schiff-base intermediate with substrate. Ile-203 contributes to the pyruvate binding site.

The protein belongs to the DapA family. Homotetramer; dimer of dimers.

It localises to the cytoplasm. The enzyme catalyses L-aspartate 4-semialdehyde + pyruvate = (2S,4S)-4-hydroxy-2,3,4,5-tetrahydrodipicolinate + H2O + H(+). It functions in the pathway amino-acid biosynthesis; L-lysine biosynthesis via DAP pathway; (S)-tetrahydrodipicolinate from L-aspartate: step 3/4. In terms of biological role, catalyzes the condensation of (S)-aspartate-beta-semialdehyde [(S)-ASA] and pyruvate to 4-hydroxy-tetrahydrodipicolinate (HTPA). This chain is 4-hydroxy-tetrahydrodipicolinate synthase, found in Thioalkalivibrio sulfidiphilus (strain HL-EbGR7).